We begin with the raw amino-acid sequence, 362 residues long: Zinc phosphodiesterase ELAC protein 1 (362 aa).

Zn(2+)-binding residues include His-62, His-64, Asp-66, His-67, His-181, Asp-252, and His-312. Asp-66 functions as the Proton acceptor in the catalytic mechanism.

Belongs to the RNase Z family. In terms of assembly, homodimer. Requires Zn(2+) as cofactor.

Its subcellular location is the cytoplasm. The protein localises to the cytosol. It localises to the nucleus. It catalyses the reaction Endonucleolytic cleavage of RNA, removing extra 3' nucleotides from tRNA precursor, generating 3' termini of tRNAs. A 3'-hydroxy group is left at the tRNA terminus and a 5'-phosphoryl group is left at the trailer molecule.. Its function is as follows. Zinc phosphodiesterase, which displays some tRNA 3'-processing endonuclease activity. Specifically involved in tRNA repair: acts downstream of the ribosome-associated quality control (RQC) pathway by removing a 2',3'-cyclic phosphate from tRNAs following cleavage by ANKZF1. tRNAs are then processed by TRNT1. The chain is Zinc phosphodiesterase ELAC protein 1 (Elac1) from Mus musculus (Mouse).